We begin with the raw amino-acid sequence, 262 residues long: ATP synthase subunit a (262 aa).

6 helical membrane passes run 32–52 (IAFT…AVFV), 98–118 (LFMF…VLGI), 127–147 (FTIT…VGFW), 153–173 (FFSL…IFPI), 189–209 (LFVA…FVID), and 219–239 (LLVG…EILV).

This sequence belongs to the ATPase A chain family. As to quaternary structure, F-type ATPases have 2 components, CF(1) - the catalytic core - and CF(0) - the membrane proton channel. CF(1) has five subunits: alpha(3), beta(3), gamma(1), delta(1), epsilon(1). CF(0) has four main subunits: a, b, b' and c.

The protein localises to the cell inner membrane. Its function is as follows. Key component of the proton channel; it plays a direct role in the translocation of protons across the membrane. The protein is ATP synthase subunit a of Erythrobacter litoralis (strain HTCC2594).